The chain runs to 292 residues: Tetratricopeptide repeat protein 1 (292 aa).

Basic and acidic residues-rich tracts occupy residues 1–12 (MEEKSEDCKVPE) and 47–64 (KAAEAHPQDDHVEEECFH). A disordered region spans residues 1–125 (MEEKSEDCKV…SAKLKEEGNE (125 aa)). Over residues 88–98 (SSSELDEEYLI) the composition is skewed to acidic residues. S90 is modified (phosphoserine). Residues 99-125 (ELEKNMPEEEKQKRREESAKLKEEGNE) are compositionally biased toward basic and acidic residues. TPR repeat units lie at residues 116-149 (SAKLKEEGNERFKRGDYMEAESSYSQALQMCPAC), 155-188 (SVLFSNRAAARMKQDKKETAITDCSKAIQLNPTY), and 189-222 (IRAILRRAELYEKTDKLDEALEDYKSVLEKDPSV).

In terms of assembly, interacts with the GAP domain of NF1. Interacts (via TPR repeats) with HSP90AA1 and HSPA8.

The polypeptide is Tetratricopeptide repeat protein 1 (Ttc1) (Mus musculus (Mouse)).